Here is a 115-residue protein sequence, read N- to C-terminus: NADH-ubiquinone oxidoreductase chain 3 (115 aa).

Transmembrane regions (helical) follow at residues L3–W23, F55–L75, and V87–I107.

It belongs to the complex I subunit 3 family. Core subunit of respiratory chain NADH dehydrogenase (Complex I) which is composed of 45 different subunits. Interacts with TMEM186. Interacts with TMEM242.

It is found in the mitochondrion inner membrane. It catalyses the reaction a ubiquinone + NADH + 5 H(+)(in) = a ubiquinol + NAD(+) + 4 H(+)(out). Core subunit of the mitochondrial membrane respiratory chain NADH dehydrogenase (Complex I) which catalyzes electron transfer from NADH through the respiratory chain, using ubiquinone as an electron acceptor. Essential for the catalytic activity of complex I. The sequence is that of NADH-ubiquinone oxidoreductase chain 3 from Dugong dugon (Dugong).